Here is a 470-residue protein sequence, read N- to C-terminus: Uronate isomerase (470 aa).

It belongs to the metallo-dependent hydrolases superfamily. Uronate isomerase family.

It catalyses the reaction D-glucuronate = D-fructuronate. The catalysed reaction is aldehydo-D-galacturonate = keto-D-tagaturonate. It functions in the pathway carbohydrate metabolism; pentose and glucuronate interconversion. The chain is Uronate isomerase from Vibrio parahaemolyticus serotype O3:K6 (strain RIMD 2210633).